The following is a 383-amino-acid chain: WAT1-related protein At3g18200 (383 aa).

The segment covering 1–16 has biased composition (basic residues); sequence MCYQTSKKKRRSRKRR. The interval 1-23 is disordered; that stretch reads MCYQTSKKKRRSRKRRAQEEKEK. 10 helical membrane passes run 33-53, 65-85, 91-111, 126-146, 158-178, 204-224, 237-257, 272-292, 300-320, and 325-345; these read VKLV…HIVS, VYPV…AYFF, PPLT…GITA, TFAS…ACAL, GVAK…ITLY, LTLG…WMVL, TLTS…ALFV, LFTI…LQTW, VFVA…AFLI, and LYSG…LVLW. 2 consecutive EamA domains span residues 44–173 and 216–344; these read FCFA…GGAT and LSWA…YLVL.

The protein belongs to the drug/metabolite transporter (DMT) superfamily. Plant drug/metabolite exporter (P-DME) (TC 2.A.7.4) family.

The protein localises to the membrane. In Arabidopsis thaliana (Mouse-ear cress), this protein is WAT1-related protein At3g18200.